The chain runs to 93 residues: Small ribosomal subunit protein bS18 (93 aa).

The protein belongs to the bacterial ribosomal protein bS18 family. Part of the 30S ribosomal subunit. Forms a tight heterodimer with protein bS6.

Its function is as follows. Binds as a heterodimer with protein bS6 to the central domain of the 16S rRNA, where it helps stabilize the platform of the 30S subunit. This is Small ribosomal subunit protein bS18 from Delftia acidovorans (strain DSM 14801 / SPH-1).